A 351-amino-acid polypeptide reads, in one-letter code: Phosphatidylinositol transfer protein PDR16 (351 aa).

Residues 135-295 form the CRAL-TRIO domain; the sequence is LVAVENESGK…LYGGDLKFKY (161 aa).

In terms of assembly, homodimer. Apo-SFH3 forms a dimer through the hydrophobic interaction of gating helices. Binding of phosphatidylinositol leads to dissociation of the dimer into monomers in a reversible manner.

Its subcellular location is the lipid droplet. The protein resides in the microsome membrane. It is found in the endoplasmic reticulum membrane. The enzyme catalyses a 1,2-diacyl-sn-glycero-3-phospho-(1D-myo-inositol)(in) = a 1,2-diacyl-sn-glycero-3-phospho-(1D-myo-inositol)(out). Has phosphatidylinositol transfer activity. Involved in the regulation of the phospholipid composition of plasma- and endomembranes. Altering plasma membrane composition may provide a possible mechanism for multidrug resistance. Involved in the regulation of sterol biosynthesis. Contributes to efficient phospholipase D1 activation in the regulation of phospholipid turnover. Regulates the release of fatty acids from lipid droplets. The chain is Phosphatidylinositol transfer protein PDR16 (PDR16) from Saccharomyces cerevisiae (strain ATCC 204508 / S288c) (Baker's yeast).